The primary structure comprises 412 residues: Class E basic helix-loop-helix protein 40 (412 aa).

The interval 1 to 139 (MERIPSAQPP…LSGRNVETGQ (139 aa)) is essential for interaction with BMAL1, E-box binding and repressor activity against the CLOCK-BMAL1 heterodimer. In terms of domain architecture, bHLH spans 52 to 107 (TYKLPHRLIEKKRRDRINECIAQLKDLLPEHLKLTTLGHLEKAVVLELTLKHVKAL). The tract at residues 75 to 79 (LKDLL) is necessary for interaction with RXRA and repressor activity against RXRA. Positions 142 to 175 (FCSGFQTCAREVLQYLAKHENTRDLKSSQLVTHL) constitute an Orange domain. Residue Lys-159 forms a Glycyl lysine isopeptide (Lys-Gly) (interchain with G-Cter in SUMO1, SUMO2 and SUMO3) linkage. A Glycyl lysine isopeptide (Lys-Gly) (interchain with G-Cter in SUMO2) cross-link involves residue Lys-167. The interval 182–303 (LLQGGTSRKP…LSDDEGHFTS (122 aa)) is disordered. At Ser-235 the chain carries Phosphoserine. Over residues 248–271 (ESEKGDLRSEQPCFKSDHGRRFTM) the composition is skewed to basic and acidic residues. A Glycyl lysine isopeptide (Lys-Gly) (interchain with G-Cter in SUMO1); alternate cross-link involves residue Lys-279. Lys-279 is covalently cross-linked (Glycyl lysine isopeptide (Lys-Gly) (interchain with G-Cter in SUMO1, SUMO2 and SUMO3); alternate). Residue Lys-279 forms a Glycyl lysine isopeptide (Lys-Gly) (interchain with G-Cter in SUMO2); alternate linkage. Residue Lys-288 forms a Glycyl lysine isopeptide (Lys-Gly) (interchain with G-Cter in SUMO2) linkage. Ser-383 bears the Phosphoserine mark.

As to quaternary structure, homodimer. Heterodimer with BHLHE41/DEC2. Interacts with TCF3/E47. Interacts with ubiquitin-conjugating enzyme UBE2I/UBC9. Interacts with HDAC1, SUMO1, RXRA and BMAL1. Post-translationally, ubiquitinated; which may lead to proteasomal degradation. Sumoylation inhibits its ubiquitination and promotes its negative regulation of the CLOCK-BMAL1 heterodimer transcriptional activator activity. As to expression, expressed in cartilage, spleen, intestine, lung, and to a lesser extent in heart, brain, liver, muscle and stomach.

It localises to the cytoplasm. Its subcellular location is the nucleus. In terms of biological role, transcriptional repressor involved in the regulation of the circadian rhythm by negatively regulating the activity of the clock genes and clock-controlled genes. Acts as the negative limb of a novel autoregulatory feedback loop (DEC loop) which differs from the one formed by the PER and CRY transcriptional repressors (PER/CRY loop). Both these loops are interlocked as it represses the expression of PER1/2 and in turn is repressed by PER1/2 and CRY1/2. Represses the activity of the circadian transcriptional activator: CLOCK-BMAL1|BMAL2 heterodimer by competing for the binding to E-box elements (5'-CACGTG-3') found within the promoters of its target genes. Negatively regulates its own expression and the expression of DBP and BHLHE41/DEC2. Acts as a corepressor of RXR and the RXR-LXR heterodimers and represses the ligand-induced RXRA and NR1H3/LXRA transactivation activity. May be involved in the regulation of chondrocyte differentiation via the cAMP pathway. Represses the transcription of NR0B2 and attentuates the transactivation of NR0B2 by the CLOCK-BMAL1 complex. Drives the circadian rhythm of blood pressure through transcriptional repression of ATP1B1 in the cardiovascular system. This Homo sapiens (Human) protein is Class E basic helix-loop-helix protein 40 (BHLHE40).